We begin with the raw amino-acid sequence, 364 residues long: Peptide chain release factor 2 (364 aa).

An N5-methylglutamine modification is found at Gln251.

Belongs to the prokaryotic/mitochondrial release factor family. Post-translationally, methylated by PrmC. Methylation increases the termination efficiency of RF2.

It is found in the cytoplasm. Peptide chain release factor 2 directs the termination of translation in response to the peptide chain termination codons UGA and UAA. In Sulfurovum sp. (strain NBC37-1), this protein is Peptide chain release factor 2.